The chain runs to 558 residues: Laccase-10 (558 aa).

The N-terminal stretch at 1–22 is a signal peptide; the sequence is MVFPIRILVLFALLAFPACVHG. 2 consecutive Plastocyanin-like domains span residues 30-146 and 157-308; these read NVVT…PKLG and EEVI…YSGT. N-linked (GlcNAc...) asparagine glycosylation occurs at N76. The Cu cation site is built by H80 and H82. N112 is a glycosylation site (N-linked (GlcNAc...) asparagine). Cu cation is bound by residues H125 and H127. N185, N296, N323, N373, N383, N400, and N441 each carry an N-linked (GlcNAc...) asparagine glycan. Positions 408–542 constitute a Plastocyanin-like 3 domain; that stretch reads DFPAKPRRVF…KMAFLVENGK (135 aa). Residues H459, H462, H464, H521, C522, H523, and H527 each coordinate Cu cation. N-linked (GlcNAc...) asparagine glycosylation occurs at N545.

The protein belongs to the multicopper oxidase family. It depends on Cu cation as a cofactor. In terms of tissue distribution, ubiquitous, with lower levels in siliques.

It is found in the secreted. The protein resides in the extracellular space. It localises to the apoplast. It carries out the reaction 4 hydroquinone + O2 = 4 benzosemiquinone + 2 H2O. Lignin degradation and detoxification of lignin-derived products. This is Laccase-10 (LAC10) from Arabidopsis thaliana (Mouse-ear cress).